Here is a 289-residue protein sequence, read N- to C-terminus: Glycerol facilitator-aquaporin gla (289 aa).

Transmembrane regions (helical) follow at residues 10-30 (ITEFVGTALLIIMGNGAVANV) and 41-61 (SWMIIGWGYGLGVMLPAVAFG). Positions 68 to 70 (NPA) match the NPA 1 motif. 3 helical membrane passes run 87–107 (AQYIIAQVLGAMFGQLLIVMV), 151–171 (FVGSFVLFFGAVAATNIFFGS), and 209–229 (MVAHLFLGFLVMGLVVALGGP). An NPA 2 motif is present at residues 235–237 (NPA). A helical transmembrane segment spans residues 264 to 284 (WYAWVPVLAPILASLAAVALF).

The protein belongs to the MIP/aquaporin (TC 1.A.8) family.

The protein localises to the cell membrane. Mixed channel protein that transports both water and glycerol. This is Glycerol facilitator-aquaporin gla (gla) from Lactococcus lactis subsp. lactis (strain IL1403) (Streptococcus lactis).